Here is a 683-residue protein sequence, read N- to C-terminus: DNA-directed RNA polymerase subunit beta' (683 aa).

Positions 69, 71, 87, and 90 each coordinate Zn(2+). Positions 489, 491, and 493 each coordinate Mg(2+).

Belongs to the RNA polymerase beta' chain family. RpoC1 subfamily. In terms of assembly, in plastids the minimal PEP RNA polymerase catalytic core is composed of four subunits: alpha, beta, beta', and beta''. When a (nuclear-encoded) sigma factor is associated with the core the holoenzyme is formed, which can initiate transcription. It depends on Mg(2+) as a cofactor. Zn(2+) serves as cofactor.

It is found in the plastid. The protein resides in the chloroplast. The enzyme catalyses RNA(n) + a ribonucleoside 5'-triphosphate = RNA(n+1) + diphosphate. In terms of biological role, DNA-dependent RNA polymerase catalyzes the transcription of DNA into RNA using the four ribonucleoside triphosphates as substrates. The sequence is that of DNA-directed RNA polymerase subunit beta' from Sorghum bicolor (Sorghum).